Reading from the N-terminus, the 288-residue chain is Pantothenate synthetase (288 aa).

Met-30–His-37 contributes to the ATP binding site. Residue His-37 is the Proton donor of the active site. Residue Gln-61 coordinates (R)-pantoate. Gln-61 serves as a coordination point for beta-alanine. Gly-147–Asp-150 contacts ATP. Gln-153 provides a ligand contact to (R)-pantoate. Residues Leu-176 and Ile-184–Arg-187 each bind ATP.

The protein belongs to the pantothenate synthetase family. In terms of assembly, homodimer.

It is found in the cytoplasm. The enzyme catalyses (R)-pantoate + beta-alanine + ATP = (R)-pantothenate + AMP + diphosphate + H(+). It functions in the pathway cofactor biosynthesis; (R)-pantothenate biosynthesis; (R)-pantothenate from (R)-pantoate and beta-alanine: step 1/1. Functionally, catalyzes the condensation of pantoate with beta-alanine in an ATP-dependent reaction via a pantoyl-adenylate intermediate. The polypeptide is Pantothenate synthetase (Prosthecochloris aestuarii (strain DSM 271 / SK 413)).